The following is a 310-amino-acid chain: Coproporphyrin III ferrochelatase (310 aa).

Residues Y13, R30, 46–47, S54, and Y125 each bind Fe-coproporphyrin III; that span reads RY. 2 residues coordinate Fe(2+): H181 and E262.

Belongs to the ferrochelatase family.

It is found in the cytoplasm. The catalysed reaction is Fe-coproporphyrin III + 2 H(+) = coproporphyrin III + Fe(2+). Its pathway is porphyrin-containing compound metabolism; protoheme biosynthesis. In terms of biological role, involved in coproporphyrin-dependent heme b biosynthesis. Catalyzes the insertion of ferrous iron into coproporphyrin III to form Fe-coproporphyrin III. This is Coproporphyrin III ferrochelatase from Halalkalibacterium halodurans (strain ATCC BAA-125 / DSM 18197 / FERM 7344 / JCM 9153 / C-125) (Bacillus halodurans).